A 472-amino-acid polypeptide reads, in one-letter code: Adenosylhomocysteinase (472 aa).

Residues Thr61, Asp139, and Glu198 each contribute to the substrate site. 199–201 contacts NAD(+); sequence TTT. Substrate contacts are provided by Lys228 and Asp232. NAD(+) is bound by residues Asn233, 262–267, Glu285, Asn320, 341–343, and Asn386; these read GFGDVG and IGH.

Belongs to the adenosylhomocysteinase family. The cofactor is NAD(+).

The protein localises to the cytoplasm. The enzyme catalyses S-adenosyl-L-homocysteine + H2O = L-homocysteine + adenosine. Its pathway is amino-acid biosynthesis; L-homocysteine biosynthesis; L-homocysteine from S-adenosyl-L-homocysteine: step 1/1. Functionally, may play a key role in the regulation of the intracellular concentration of adenosylhomocysteine. The protein is Adenosylhomocysteinase of Sphingopyxis alaskensis (strain DSM 13593 / LMG 18877 / RB2256) (Sphingomonas alaskensis).